We begin with the raw amino-acid sequence, 93 residues long: MDKSMLGDLDGLPEEDKMRMAAMVDQLQIRDSLRMYNSLVERCFTDCVDTFRRKTLDKQEESCVRRCAEKFLKHSMRVGMRFAELNQGVATPD.

Positions C43 to C67 match the Twin CX3C motif motif. 2 disulfide bridges follow: C43–C67 and C47–C63.

Belongs to the small Tim family. In terms of assembly, heterohexamer; composed of 3 copies of TIM9 and 3 copies of TIM10, named soluble 70 kDa complex. The complex associates with the TIM22 component of the TIM22 complex. Interacts with multi-pass transmembrane proteins in transit.

It localises to the mitochondrion inner membrane. Mitochondrial intermembrane chaperone that participates in the import and insertion of multi-pass transmembrane proteins into the mitochondrial inner membrane. May also be required for the transfer of beta-barrel precursors from the TOM complex to the sorting and assembly machinery (SAM complex) of the outer membrane. Acts as a chaperone-like protein that protects the hydrophobic precursors from aggregation and guide them through the mitochondrial intermembrane space. This chain is Mitochondrial import inner membrane translocase subunit Tim9 (TIM9), found in Oryza sativa subsp. japonica (Rice).